The sequence spans 892 residues: Alpha-actinin-1 (892 aa).

An N-acetylmethionine modification is found at Met-1. The tract at residues 1-247 (MDHYDSQQTN…IMTYVSSFYH (247 aa)) is actin-binding. Ser-6 is modified (phosphoserine). Tyr-12 carries the post-translational modification Phosphotyrosine; by FAK1. Calponin-homology (CH) domains lie at 31–135 (KQQR…LRFA) and 144–250 (TSAK…HAFS). An N6-acetyllysine mark is found at Lys-95 and Lys-195. 4 Spectrin repeats span residues 274-384 (QLME…WLLN), 394-499 (HLAE…ALER), 509-620 (QLYL…ALTE), and 630-733 (RLRK…EVEN). Residues 274 to 733 (QLMEDYEKLA…IARTINEVEN (460 aa)) are interaction with DDN. Position 471 is a phosphoserine (Ser-471). At Lys-676 the chain carries N6-acetyllysine. Ser-677 carries the post-translational modification Phosphoserine. EF-hand domains follow at residues 746–781 (EQMN…LGYD) and 787–822 (QGEA…ETAD). The Ca(2+) site is built by Asp-759, Asp-761, Ser-763, Thr-765, and Glu-770. Ser-890 is subject to Phosphoserine.

It belongs to the alpha-actinin family. As to quaternary structure, homodimer; antiparallel. Interacts with MYOZ2, TTID and LPP. Interacts with DDN. Interacts with PSD. Interacts with MICALL2. Interacts with DNM2 and CTTN. Interacts with PDLIM1. Interacts with PDLIM2. Interacts with PDLIM4 (via PDZ domain). Interacts with IGSF8.

Its subcellular location is the cytoplasm. It is found in the cytoskeleton. The protein resides in the myofibril. The protein localises to the sarcomere. It localises to the z line. Its subcellular location is the cell membrane. It is found in the cell junction. The protein resides in the cell projection. The protein localises to the ruffle. Its function is as follows. F-actin cross-linking protein which is thought to anchor actin to a variety of intracellular structures. Association with IGSF8 regulates the immune synapse formation and is required for efficient T-cell activation. This chain is Alpha-actinin-1 (ACTN1), found in Bos taurus (Bovine).